The primary structure comprises 428 residues: MLDPKFLRTELEATAERLATRGFILDVERLSKLEEKRKSLQMATEELQASRNAISKSIGQAKAKGEDVAPIMAQVGDLGSQLDTKKQELAELLETLNAIAMSVPNLPDESVPAGADESENVEVRRWGTPKEFNFEVKDHVELGETLGGLDFKAAVKITGTRFIIMKGQIARMNRALAQFMLDLHTTEHGYTEAYVPLLVNEESLLGTGQLPKFGEDLFHTKPATEEGQGLSLIPTAEVPLTNIARDTIIDEADLPVKLTAHTPCFRSEAGSYGRDTRGLIRQHQFDKVELVQLVKPEDSMAALDSLTGHAETVLQKLELPYRTVVLCTGDMGFGSSKTFDIEVWLPAQNTYREISSCSNMQDFQARRMQARYKAKSAKKPALLHTLNGSGLAVGRTLVAVIENYQNEDGSITVPEVLRPYMGGLEKIG.

T235–E237 is a binding site for L-serine. Residue R266–E268 coordinates ATP. E289 provides a ligand contact to L-serine. E353–S356 contributes to the ATP binding site. An L-serine-binding site is contributed by S389.

Belongs to the class-II aminoacyl-tRNA synthetase family. Type-1 seryl-tRNA synthetase subfamily. Homodimer. The tRNA molecule binds across the dimer.

It localises to the cytoplasm. The catalysed reaction is tRNA(Ser) + L-serine + ATP = L-seryl-tRNA(Ser) + AMP + diphosphate + H(+). The enzyme catalyses tRNA(Sec) + L-serine + ATP = L-seryl-tRNA(Sec) + AMP + diphosphate + H(+). It functions in the pathway aminoacyl-tRNA biosynthesis; selenocysteinyl-tRNA(Sec) biosynthesis; L-seryl-tRNA(Sec) from L-serine and tRNA(Sec): step 1/1. Its function is as follows. Catalyzes the attachment of serine to tRNA(Ser). Is also able to aminoacylate tRNA(Sec) with serine, to form the misacylated tRNA L-seryl-tRNA(Sec), which will be further converted into selenocysteinyl-tRNA(Sec). In Shewanella sediminis (strain HAW-EB3), this protein is Serine--tRNA ligase.